Consider the following 1019-residue polypeptide: Mediator of replication checkpoint protein 1 (1019 aa).

6 disordered regions span residues 1–33 (MASLDENADELHRMDSSDEASINDDQEDILDTP), 105–143 (QGGKSSLQKKEVEQIETQEGGDNAKGSPSSENKDSDRNS), 166–202 (NSATSHSKSDNLDSESADDSDLADESELSKKYTSDRK), 261–290 (EEEANSTEPPNVEKEEPKPSVDRSTGIVNS), 443–683 (IQGE…SKTF), and 965–1019 (TQRP…SDFD). The segment covering 17–30 (SDEASINDDQEDIL) has biased composition (acidic residues). Positions 177 to 191 (LDSESADDSDLADES) are enriched in acidic residues. 3 stretches are compositionally biased toward basic and acidic residues: residues 192-202 (ELSKKYTSDRK), 271-281 (NVEKEEPKPSV), and 454-468 (LERARNDAEKIRQLE). Over residues 476–486 (DEGELNDEEEV) the composition is skewed to acidic residues. The span at 487 to 503 (ISSSNTPSTKAKTTNKV) shows a compositional bias: polar residues. Over residues 556–580 (MIRDSFDRLSSESIKDSQKTEELHD) the composition is skewed to basic and acidic residues. Polar residues-rich tracts occupy residues 590 to 607 (QSTSLYVQNSQPSASQLT) and 630 to 658 (NTSSTQPSQVDSLVPTQLDSTIPTQIDSV). Residue S604 is modified to Phosphoserine. Residue T645 is modified to Phosphothreonine. Basic and acidic residues predominate over residues 671–681 (EERRESRRDSK).

As to quaternary structure, interacts with cds1. In terms of processing, phosphorylated by rad3 and tel1.

The protein resides in the nucleus. Functionally, component of the replisome and is required for rad3-dependent activation of the checkpoint kinase cds1 in response to replication fork arrest. Phosphorylation allows it to mediate the activation of cds1. This chain is Mediator of replication checkpoint protein 1 (mrc1), found in Schizosaccharomyces pombe (strain 972 / ATCC 24843) (Fission yeast).